Here is a 1079-residue protein sequence, read N- to C-terminus: Extracellular calcium-sensing receptor (1079 aa).

A signal peptide spans 1 to 19 (MAWFGYCLALLALTWHSSA). The Extracellular segment spans residues 20–610 (YGPDQRAQKK…KEIEFLAWTE (591 aa)). Residues 22-188 (PDQRAQKKGD…QFKSFLRTIP (167 aa)) are ligand-binding 1 (LB1). Cysteine 60 and cysteine 101 are oxidised to a cystine. 66 to 70 (RGFRW) provides a ligand contact to phosphate. 4 residues coordinate Ca(2+): isoleucine 81, serine 84, leucine 87, and leucine 88. A glycan (N-linked (GlcNAc...) asparagine) is linked at asparagine 90. A Ca(2+)-binding site is contributed by threonine 100. Asparagine 130 carries an N-linked (GlcNAc...) asparagine glycan. Threonine 145 contacts Ca(2+). Positions 147, 168, and 170 each coordinate L-tryptophan. Residues serine 170, proline 188, aspartate 190, glutamate 231, and aspartate 234 each contribute to the Ca(2+) site. Positions 189 to 324 (NDEHQATAMA…GGTIGFGLKA (136 aa)) are ligand-binding 2 (LB2). 7 cysteine pairs are disulfide-bonded: cysteine 236–cysteine 561, cysteine 358–cysteine 395, cysteine 437–cysteine 449, cysteine 542–cysteine 562, cysteine 546–cysteine 565, cysteine 568–cysteine 582, and cysteine 585–cysteine 598. Positions 238 and 240 each coordinate spermine. N-linked (GlcNAc...) asparagine glycosylation is found at asparagine 261 and asparagine 287. Residue glutamate 297 coordinates Ca(2+). Residue glutamate 297 participates in L-tryptophan binding. Residue asparagine 386 is glycosylated (N-linked (GlcNAc...) asparagine). Phosphate is bound at residue 415 to 417 (RIS). Residues asparagine 446, asparagine 468, and asparagine 488 are each glycosylated (N-linked (GlcNAc...) asparagine). Residue tyrosine 489 participates in Ca(2+) binding. The N-linked (GlcNAc...) asparagine glycan is linked to asparagine 541. Residues 542-612 (CSRDCQAGTR…IEFLAWTEPF (71 aa)) form a cysteine-rich (CR) region. Glycine 557 serves as a coordination point for Ca(2+). The N-linked (GlcNAc...) asparagine glycan is linked to asparagine 594. Residues 611 to 636 (PFGIALTLFAVLGIFLTAFVLGVFIK) form a helical membrane-spanning segment. At 637–648 (FRNTPIVKATNR) the chain is on the cytoplasmic side. The intracellular loop 1 (ICL1) stretch occupies residues 637-648 (FRNTPIVKATNR). Residues 649-668 (ELSYLLLFSLLCCFSSSLFF) form a helical membrane-spanning segment. Over 669-674 (IGEPQD) the chain is Extracellular. A helical transmembrane segment spans residues 675–698 (WTCRLRQPAFGISFVLCISCILVK). The Cytoplasmic segment spans residues 699–722 (TNRVLLVFEAKIPTSFHRKWWGLN). The interval 699–722 (TNRVLLVFEAKIPTSFHRKWWGLN) is intracellular loop 2 (ICL2). The chain crosses the membrane as a helical span at residues 723–745 (LQFLLVFLCTFMQIVICIIWLYT). Residues 746 to 769 (APPSSYRNHELEDEIIFITCHEGS) lie on the Extracellular side of the membrane. A helical transmembrane segment spans residues 770 to 789 (LMALGSLIGYTCLLAAICFF). Topologically, residues 790-805 (FAFKSRKLPENFNEAK) are cytoplasmic. Residues 790 to 805 (FAFKSRKLPENFNEAK) are intracellular loop 3 (ICL3). A helical transmembrane segment spans residues 806–828 (FITFSMLIFFIVWISFIPAYAST). Topologically, residues 829-832 (YGKF) are extracellular. A helical membrane pass occupies residues 833–854 (VSAVEVIAILAASFGLLACIFF). Topologically, residues 855 to 1079 (NKVYIILFKP…SSVTENILHS (225 aa)) are cytoplasmic. Residues 855 to 1079 (NKVYIILFKP…SSVTENILHS (225 aa)) are C-terminus. The segment at 880–900 (AFKVAARATLRRPNISRKRSS) is interaction with RNF19A. Residue threonine 888 is modified to Phosphothreonine. The interval 890 to 898 (RRPNISRKR) is arginine-rich retention motif. The interval 894-964 (ISRKRSSSLG…QQQPQQPRCK (71 aa)) is disordered. The residue at position 899 (serine 899) is a Phosphoserine. Residues 900-918 (SSLGGSTGSIPSSSISSKS) are compositionally biased toward low complexity. Positions 919–931 (NSEDRFPQPERQK) are enriched in basic and acidic residues. Residue serine 920 is modified to Phosphoserine. Residues 932 to 961 (QQQPLALTQQEQQQQPLTLQPQQQQQPQQP) show a composition bias toward low complexity. The residue at position 1062 (serine 1062) is a Phosphoserine.

This sequence belongs to the G-protein coupled receptor 3 family. As to quaternary structure, homodimer; disulfide-linked. Interacts with VCP. Interacts with ARRB1. Post-translationally, phosphorylation at Thr-888 by PKC impairs coupling with G(q)/G(11) G-proteins, while it does not affect G(i)/G(o)-coupling. Phosphorylation at Ser-899 by PKA promote plasma membrane localization. Ubiquitinated by RNF19A; which induces proteasomal degradation. Epidermis, kidney and cartilage.

It localises to the cell membrane. In resting state, adopts an open conformation, anion-binding promoting the inactive configuration. Upon aromatic amino acid-binding, the groove in the extracellular venus flytrap module is closed, thereby inducing the formation of a novel homodimer interface between subunits. Calcium ions stabilize the active state by enhancing homodimer interactions between membrane-proximal domains to fully activate the receptor. Upon activation, the homodimer adopts an asymmetric configuration of the 7-transmembrane region that primes one protomer for G-protein coupling. G-protein binding expands the transmembrane dimer interface; the restriction imposed by the receptor dimer, in combination with intracellular loop 2 (ICL2), enables G-protein activation by facilitating conformational transition of G-protein alpha. Coupling to different classes of G-proteins results in distinct CASR-G-protein interfaces. In terms of biological role, G-protein-coupled receptor that senses changes in the extracellular concentration of calcium ions and plays a key role in maintaining calcium homeostasis. Senses fluctuations in the circulating calcium concentration: activated by elevated circulating calcium, leading to decreased parathyroid hormone (PTH) secretion in parathyroid glands. In kidneys, acts as a key regulator of renal tubular calcium resorption. Ligand binding causes a conformation change that triggers signaling via guanine nucleotide-binding proteins (G-proteins) and modulates the activity of downstream effectors. CASR is coupled with different G(q)/G(11), G(i)/G(o)- or G(s)-classes of G-proteins depending on the context. In the parathyroid and kidney, CASR signals through G(q)/G(11) and G(i)/G(o) G-proteins: G(q)/G(11) coupling activates phospholipase C-beta, releasing diacylglycerol (DAG) and inositol 1,4,5-trisphosphate (IP3) second messengers, while G(i)/G(o) coupling mediates inhibition of adenylate cyclase activity. The G-protein-coupled receptor activity is activated by a co-agonist mechanism: aromatic amino acids, such as Trp or Phe, act concertedly with divalent cations, such as calcium or magnesium, to achieve full receptor activation. Acts as an activator of the NLRP3 inflammasome via G(i)/G(o)-mediated signaling: down-regulation of cyclic AMP (cAMP) relieving NLRP3 inhibition by cAMP. Acts as a regulator of proton-sensing receptor GPR68 in a seesaw manner: CASR-mediated signaling inhibits GPR68 signaling in response to extracellular calcium, while GPR68 inhibits CASR in presence of extracellular protons. In Mus musculus (Mouse), this protein is Extracellular calcium-sensing receptor.